Here is a 615-residue protein sequence, read N- to C-terminus: Homologous recombination OB-fold protein (615 aa).

Disordered regions lie at residues 42–75 (LRPV…PRLC), 213–326 (PWPS…PVTQ), and 546–590 (DFLE…FPEE). At S47 the chain carries Phosphoserine. 3 stretches are compositionally biased toward polar residues: residues 47-71 (SRPQ…NQSV), 232-241 (SCVSTSQQRG), and 257-275 (IRSS…SPRA). Residues 302-317 (SSRAPVSSVESPVSTP) show a composition bias toward low complexity.

Interacts with MCM8; this interaction is necessary for MCM8-MCM9 helicase complex recruitment to DNA damage sites. Interacts with RPA1; this interaction associates HROB with the RPA complex.

It localises to the nucleus. Its subcellular location is the chromosome. Functionally, DNA-binding protein involved in homologous recombination that acts by recruiting the MCM8-MCM9 helicase complex to sites of DNA damage to promote DNA repair synthesis. The protein is Homologous recombination OB-fold protein of Mus musculus (Mouse).